The sequence spans 79 residues: Cell division protein ZapB (79 aa).

Positions 6–78 (FEKLEVKVQQ…LRALLGKMEE (73 aa)) form a coiled coil.

This sequence belongs to the ZapB family. In terms of assembly, homodimer. The ends of the coiled-coil dimer bind to each other, forming polymers. Interacts with FtsZ.

The protein localises to the cytoplasm. In terms of biological role, non-essential, abundant cell division factor that is required for proper Z-ring formation. It is recruited early to the divisome by direct interaction with FtsZ, stimulating Z-ring assembly and thereby promoting cell division earlier in the cell cycle. Its recruitment to the Z-ring requires functional FtsA or ZipA. The protein is Cell division protein ZapB of Yersinia enterocolitica serotype O:8 / biotype 1B (strain NCTC 13174 / 8081).